The primary structure comprises 351 residues: Phenoloxidase-activating factor 3 (351 aa).

An N-terminal signal peptide occupies residues 1-19; sequence MWLSLVILGVASAIVNVST. N-linked (GlcNAc...) asparagine glycosylation occurs at Asn-16. The Clip domain maps to 22–73; the sequence is SCTTPNGETATCLPIESCKIFWDYVVTSGADPEINSFLRASLCRQGNYVVCC. 8 cysteine pairs are disulfide-bonded: Cys-23-Cys-72, Cys-33-Cys-64, Cys-39-Cys-73, Cys-89-Cys-224, Cys-127-Cys-143, Cys-167-Cys-176, Cys-268-Cys-285, and Cys-295-Cys-326. The Peptidase S1 domain occupies 97–350; that stretch reads VLGGEDTDLG…HLDWIKQNVR (254 aa). Residue His-142 is the Charge relay system of the active site. 4 residues coordinate Ca(2+): Glu-158, Asp-160, Ala-163, and Asp-166. Asp-204 (charge relay system) is an active-site residue. Ser-299 (charge relay system) is an active-site residue.

This sequence belongs to the peptidase S1 family. CLIP subfamily. In the active form, heterodimer of a light chain and a heavy chain; disulfide-linked. Proteolytically cleaved.

Its subcellular location is the secreted. With respect to regulation, cleavage of PPAF2 is Ca(2+)-independent. Inhibited by heparin. Its function is as follows. Serine endopeptidase which, by cleaving prophenoloxidase activating factor PPAF2, is required for the activation of the prophenoloxidase cascade probably following the recognition of pathogen-derived products. The chain is Phenoloxidase-activating factor 3 from Holotrichia diomphalia (Korean black chafer).